The sequence spans 51 residues: Small ribosomal subunit protein eS31 (51 aa).

The Zn(2+) site is built by C22, C25, C40, and C43. The segment at 22–43 (CPRCGPGVFMADHGDRWACGRC) adopts a C4-type zinc-finger fold.

This sequence belongs to the eukaryotic ribosomal protein eS31 family. In terms of assembly, part of the 30S ribosomal subunit. It depends on Zn(2+) as a cofactor.

This Pyrococcus abyssi (strain GE5 / Orsay) protein is Small ribosomal subunit protein eS31.